Here is a 361-residue protein sequence, read N- to C-terminus: Phosphoserine aminotransferase (361 aa).

Position 42 (R42) interacts with L-glutamate. Pyridoxal 5'-phosphate is bound by residues 76-77, W102, T153, D173, and Q196; that span reads AR. The residue at position 197 (K197) is an N6-(pyridoxal phosphate)lysine. Pyridoxal 5'-phosphate is bound at residue 238-239; it reads NT.

Belongs to the class-V pyridoxal-phosphate-dependent aminotransferase family. SerC subfamily. Homodimer. It depends on pyridoxal 5'-phosphate as a cofactor.

Its subcellular location is the cytoplasm. The catalysed reaction is O-phospho-L-serine + 2-oxoglutarate = 3-phosphooxypyruvate + L-glutamate. It carries out the reaction 4-(phosphooxy)-L-threonine + 2-oxoglutarate = (R)-3-hydroxy-2-oxo-4-phosphooxybutanoate + L-glutamate. The protein operates within amino-acid biosynthesis; L-serine biosynthesis; L-serine from 3-phospho-D-glycerate: step 2/3. Its pathway is cofactor biosynthesis; pyridoxine 5'-phosphate biosynthesis; pyridoxine 5'-phosphate from D-erythrose 4-phosphate: step 3/5. Its function is as follows. Catalyzes the reversible conversion of 3-phosphohydroxypyruvate to phosphoserine and of 3-hydroxy-2-oxo-4-phosphonooxybutanoate to phosphohydroxythreonine. This Pectobacterium atrosepticum (strain SCRI 1043 / ATCC BAA-672) (Erwinia carotovora subsp. atroseptica) protein is Phosphoserine aminotransferase.